Reading from the N-terminus, the 218-residue chain is Small ribosomal subunit protein uS3c (218 aa).

The KH type-2 domain occupies Val-47 to Ala-118.

This sequence belongs to the universal ribosomal protein uS3 family. Part of the 30S ribosomal subunit.

It is found in the plastid. It localises to the chloroplast. This is Small ribosomal subunit protein uS3c (rps3) from Amborella trichopoda.